The sequence spans 967 residues: Vacuolar membrane protease (967 aa).

Residues 1–16 lie on the Cytoplasmic side of the membrane; the sequence is MARPSLSRSNPLGFTP. The helical transmembrane segment at 17 to 37 threads the bilayer; the sequence is WPVTVITAVVYLALVVPLLVV. Residues 38–387 lie on the Vacuolar side of the membrane; the sequence is HHVVPSAPSS…SAFVVFELHT (350 aa). Residues N53 and N119 are each glycosylated (N-linked (GlcNAc...) asparagine). Positions 171 and 183 each coordinate Zn(2+). Catalysis depends on E217, which acts as the Proton acceptor. Positions 218, 243, and 316 each coordinate Zn(2+). Residues 388–408 form a helical membrane-spanning segment; sequence LFALSVTLLVVAPLVLLVTSI. At 409–441 the chain is on the cytoplasmic side; that stretch reads ALNRADKMYLFRASASPEDSDGSEAVLLHGVRG. A helical membrane pass occupies residues 442–462; the sequence is FFRFPFLLVIPTAVTVGLAYL. The Vacuolar segment spans residues 463-472; the sequence is VTKFNPYIIH. Residues 473–493 traverse the membrane as a helical segment; it reads SSEYAVWSMMISAWVFLAWFV. The Cytoplasmic segment spans residues 494-507; the sequence is SRVADFARPSAFHR. The helical transmembrane segment at 508–528 threads the bilayer; the sequence is VYTLTWLFLVEWVLLVISTVY. Over 529–532 the chain is Vacuolar; sequence ENKY. Residues 533–553 traverse the membrane as a helical segment; that stretch reads GLAGGYFVFFAFAGTFLATWI. At 554-663 the chain is on the cytoplasmic side; that stretch reads SYLELFALPR…WSIHLPKWVW (110 aa). The segment at 579–612 is disordered; that stretch reads SSHGSRLGTASGEDVEDGEDEDEDDDGTTAEATE. The segment covering 591–606 has biased composition (acidic residues); that stretch reads EDVEDGEDEDEDDDGT. The helical transmembrane segment at 664 to 684 threads the bilayer; that stretch reads VLQFLLTAPLVLTFVGPLALL. The Vacuolar portion of the chain corresponds to 685–700; sequence LTSALRQTGQDGSSSL. Residues 701-721 traverse the membrane as a helical segment; the sequence is FIYIAVAALTTLLFIPLLPFI. Over 722 to 727 the chain is Cytoplasmic; that stretch reads HRYTHH. A helical membrane pass occupies residues 728-748; the sequence is IPLFLLCVFAGTLIYNLVAFP. The Vacuolar segment spans residues 749-967; it reads FSPANRLKLF…LVEGSRRFEI (219 aa). N795 and N832 each carry an N-linked (GlcNAc...) asparagine glycan.

This sequence belongs to the peptidase M28 family. The cofactor is Zn(2+).

It localises to the vacuole membrane. Its function is as follows. May be involved in vacuolar sorting and osmoregulation. The sequence is that of Vacuolar membrane protease from Neosartorya fischeri (strain ATCC 1020 / DSM 3700 / CBS 544.65 / FGSC A1164 / JCM 1740 / NRRL 181 / WB 181) (Aspergillus fischerianus).